We begin with the raw amino-acid sequence, 230 residues long: 7-cyano-7-deazaguanine synthase (230 aa).

Leu14–Leu24 contacts ATP. Zn(2+) contacts are provided by Cys194, Cys204, Cys207, and Cys210.

It belongs to the QueC family. Zn(2+) is required as a cofactor.

It carries out the reaction 7-carboxy-7-deazaguanine + NH4(+) + ATP = 7-cyano-7-deazaguanine + ADP + phosphate + H2O + H(+). It participates in purine metabolism; 7-cyano-7-deazaguanine biosynthesis. Functionally, catalyzes the ATP-dependent conversion of 7-carboxy-7-deazaguanine (CDG) to 7-cyano-7-deazaguanine (preQ(0)). In Vesicomyosocius okutanii subsp. Calyptogena okutanii (strain HA), this protein is 7-cyano-7-deazaguanine synthase.